The primary structure comprises 589 residues: ATP-dependent lipid A-core flippase (589 aa).

Transmembrane regions (helical) follow at residues 29–49, 68–88, 157–177, 254–274, and 283–303; these read WLLV…STFL, ALWL…AGYI, VIGA…AILL, LSSA…LLIA, and LSPG…PALK. Positions 32-314 constitute an ABC transmembrane type-1 domain; that stretch reads VVAACGALLE…LTNVQNMLQS (283 aa). The ABC transporter domain maps to 346 to 582; that stretch reads IEFRGITARY…DGLYAYLYSM (237 aa). 380–387 lines the ATP pocket; that stretch reads GRSGSGKS.

The protein belongs to the ABC transporter superfamily. Lipid exporter (TC 3.A.1.106) family. Homodimer.

The protein localises to the cell inner membrane. The enzyme catalyses ATP + H2O + lipid A-core oligosaccharideSide 1 = ADP + phosphate + lipid A-core oligosaccharideSide 2.. Functionally, involved in lipopolysaccharide (LPS) biosynthesis. Translocates lipid A-core from the inner to the outer leaflet of the inner membrane. Transmembrane domains (TMD) form a pore in the inner membrane and the ATP-binding domain (NBD) is responsible for energy generation. The chain is ATP-dependent lipid A-core flippase from Xylella fastidiosa (strain 9a5c).